We begin with the raw amino-acid sequence, 310 residues long: Terpene synthase 6 (310 aa).

The short motif at 93–98 (DDFYFE) is the DDxx(x)D/E motif element. Residues 222–230 (NDCYSFNKE) carry the NDxxSxxxD/E motif motif.

This sequence belongs to the terpene synthase family.

The catalysed reaction is (2E,6E)-farnesyl diphosphate = (E)-beta-farnesene + diphosphate. It catalyses the reaction (2E,6E)-farnesyl diphosphate = (1S,2S,4R)-beta-elemene + diphosphate. The enzyme catalyses (2E,6E)-farnesyl diphosphate = (3E,6E)-alpha-farnesene + diphosphate. Its function is as follows. Terpene synthase that converts its substrate farnesyl diphosphate (FPP) into the sesquiterpenes beta-elemene, (E)-beta-farnesene and (E,E)-alpha-farnesene. This is Terpene synthase 6 from Dictyostelium purpureum (Slime mold).